A 419-amino-acid chain; its full sequence is UDP-N-acetylglucosamine 1-carboxyvinyltransferase (419 aa).

22–23 (KN) serves as a coordination point for phosphoenolpyruvate. A UDP-N-acetyl-alpha-D-glucosamine-binding site is contributed by Arg-93. The active-site Proton donor is the Cys-117. Cys-117 carries the 2-(S-cysteinyl)pyruvic acid O-phosphothioketal modification. UDP-N-acetyl-alpha-D-glucosamine contacts are provided by Asp-307 and Ile-329.

It belongs to the EPSP synthase family. MurA subfamily.

It localises to the cytoplasm. The catalysed reaction is phosphoenolpyruvate + UDP-N-acetyl-alpha-D-glucosamine = UDP-N-acetyl-3-O-(1-carboxyvinyl)-alpha-D-glucosamine + phosphate. Its pathway is cell wall biogenesis; peptidoglycan biosynthesis. In terms of biological role, cell wall formation. Adds enolpyruvyl to UDP-N-acetylglucosamine. This chain is UDP-N-acetylglucosamine 1-carboxyvinyltransferase, found in Shewanella denitrificans (strain OS217 / ATCC BAA-1090 / DSM 15013).